We begin with the raw amino-acid sequence, 181 residues long: Endoribonuclease YbeY (181 aa).

His120, His124, and His130 together coordinate Zn(2+). Residues 157–181 (AGGKRPAGGADGADGAGEPGPTAAR) form a disordered region. Residues 161–174 (RPAGGADGADGAGE) show a composition bias toward gly residues.

Belongs to the endoribonuclease YbeY family. Requires Zn(2+) as cofactor.

It is found in the cytoplasm. Functionally, single strand-specific metallo-endoribonuclease involved in late-stage 70S ribosome quality control and in maturation of the 3' terminus of the 16S rRNA. This Frankia alni (strain DSM 45986 / CECT 9034 / ACN14a) protein is Endoribonuclease YbeY.